The chain runs to 64 residues: Prokaryotic ubiquitin-like protein Pup (64 aa).

The disordered stretch occupies residues 1 to 35; it reads MAQGGQVSAGGGRRDDDEPIEQTSGAGTQQVNVTG. Positions 21–33 are enriched in polar residues; sequence EQTSGAGTQQVNV. Residues 21–58 form an ARC ATPase binding region; that stretch reads EQTSGAGTQQVNVTGTDDLLDEIDGLLENNAEEFVRSY. Q64 carries the deamidated glutamine modification. Residue Q64 forms an Isoglutamyl lysine isopeptide (Gln-Lys) (interchain with K-? in acceptor proteins) linkage.

The protein belongs to the prokaryotic ubiquitin-like protein family. As to quaternary structure, strongly interacts with the proteasome-associated ATPase ARC through a hydrophobic interface; the interacting region of Pup lies in its C-terminal half. There is one Pup binding site per ARC hexamer ring. In terms of processing, is modified by deamidation of its C-terminal glutamine to glutamate by the deamidase Dop, a prerequisite to the subsequent pupylation process.

It participates in protein degradation; proteasomal Pup-dependent pathway. In terms of biological role, protein modifier that is covalently attached to lysine residues of substrate proteins, thereby targeting them for proteasomal degradation. The tagging system is termed pupylation. In Corynebacterium jeikeium (strain K411), this protein is Prokaryotic ubiquitin-like protein Pup.